A 320-amino-acid polypeptide reads, in one-letter code: tRNA-cytidine(32) 2-sulfurtransferase (320 aa).

The PP-loop motif motif lies at 54–59; it reads SGGKDS. Residues Cys-129, Cys-132, and Cys-220 each coordinate [4Fe-4S] cluster.

This sequence belongs to the TtcA family. As to quaternary structure, homodimer. The cofactor is Mg(2+). It depends on [4Fe-4S] cluster as a cofactor.

It localises to the cytoplasm. The enzyme catalyses cytidine(32) in tRNA + S-sulfanyl-L-cysteinyl-[cysteine desulfurase] + AH2 + ATP = 2-thiocytidine(32) in tRNA + L-cysteinyl-[cysteine desulfurase] + A + AMP + diphosphate + H(+). The protein operates within tRNA modification. Catalyzes the ATP-dependent 2-thiolation of cytidine in position 32 of tRNA, to form 2-thiocytidine (s(2)C32). The sulfur atoms are provided by the cysteine/cysteine desulfurase (IscS) system. This chain is tRNA-cytidine(32) 2-sulfurtransferase, found in Bordetella bronchiseptica (strain ATCC BAA-588 / NCTC 13252 / RB50) (Alcaligenes bronchisepticus).